Consider the following 81-residue polypeptide: ATP synthase subunit c (81 aa).

2 helical membrane-spanning segments follow: residues 6–26 and 57–77; these read AAAS…GPGI and LAFM…LLFA.

The protein belongs to the ATPase C chain family. In terms of assembly, F-type ATPases have 2 components, F(1) - the catalytic core - and F(0) - the membrane proton channel. F(1) has five subunits: alpha(3), beta(3), gamma(1), delta(1), epsilon(1). F(0) has four main subunits: a(1), b(1), b'(1) and c(10-14). The alpha and beta chains form an alternating ring which encloses part of the gamma chain. F(1) is attached to F(0) by a central stalk formed by the gamma and epsilon chains, while a peripheral stalk is formed by the delta, b and b' chains.

It localises to the cellular thylakoid membrane. Functionally, f(1)F(0) ATP synthase produces ATP from ADP in the presence of a proton or sodium gradient. F-type ATPases consist of two structural domains, F(1) containing the extramembraneous catalytic core and F(0) containing the membrane proton channel, linked together by a central stalk and a peripheral stalk. During catalysis, ATP synthesis in the catalytic domain of F(1) is coupled via a rotary mechanism of the central stalk subunits to proton translocation. Its function is as follows. Key component of the F(0) channel; it plays a direct role in translocation across the membrane. A homomeric c-ring of between 10-14 subunits forms the central stalk rotor element with the F(1) delta and epsilon subunits. The sequence is that of ATP synthase subunit c from Picosynechococcus sp. (strain ATCC 27264 / PCC 7002 / PR-6) (Agmenellum quadruplicatum).